A 283-amino-acid chain; its full sequence is Cyclin-C (283 aa).

Residues asparagine 46 to glutamate 144 enclose the Cyclin N-terminal domain. The interval threonine 252–serine 283 is disordered. The segment covering proline 272–serine 283 has biased composition (polar residues).

The protein belongs to the cyclin family. Cyclin C subfamily. Component of the Mediator complex. The cylin/CDK pair formed by CCNC/CDK8 also associates with the large subunit of RNA polymerase II.

The protein resides in the nucleus. Component of the Mediator complex, a coactivator involved in regulated gene transcription of nearly all RNA polymerase II-dependent genes. Mediator functions as a bridge to convey information from gene-specific regulatory proteins to the basal RNA polymerase II transcription machinery. Mediator is recruited to promoters by direct interactions with regulatory proteins and serves as a scaffold for the assembly of a functional preinitiation complex with RNA polymerase II and the general transcription factors. Binds to and activates cyclin-dependent kinase CDK8 that phosphorylates the CTD (C-terminal domain) of the large subunit of RNA polymerase II (RNAp II), which may inhibit the formation of a transcription initiation complex. In Gallus gallus (Chicken), this protein is Cyclin-C (CCNC).